We begin with the raw amino-acid sequence, 391 residues long: UDP-N-acetylglucosamine--N-acetylmuramyl-(pentapeptide) pyrophosphoryl-undecaprenol N-acetylglucosamine transferase (391 aa).

Residues 11–13, R176, S206, and Q312 each bind UDP-N-acetyl-alpha-D-glucosamine; that span reads TGG.

This sequence belongs to the glycosyltransferase 28 family. MurG subfamily.

The protein resides in the cell inner membrane. The catalysed reaction is di-trans,octa-cis-undecaprenyl diphospho-N-acetyl-alpha-D-muramoyl-L-alanyl-D-glutamyl-meso-2,6-diaminopimeloyl-D-alanyl-D-alanine + UDP-N-acetyl-alpha-D-glucosamine = di-trans,octa-cis-undecaprenyl diphospho-[N-acetyl-alpha-D-glucosaminyl-(1-&gt;4)]-N-acetyl-alpha-D-muramoyl-L-alanyl-D-glutamyl-meso-2,6-diaminopimeloyl-D-alanyl-D-alanine + UDP + H(+). It participates in cell wall biogenesis; peptidoglycan biosynthesis. Functionally, cell wall formation. Catalyzes the transfer of a GlcNAc subunit on undecaprenyl-pyrophosphoryl-MurNAc-pentapeptide (lipid intermediate I) to form undecaprenyl-pyrophosphoryl-MurNAc-(pentapeptide)GlcNAc (lipid intermediate II). This chain is UDP-N-acetylglucosamine--N-acetylmuramyl-(pentapeptide) pyrophosphoryl-undecaprenol N-acetylglucosamine transferase, found in Treponema denticola (strain ATCC 35405 / DSM 14222 / CIP 103919 / JCM 8153 / KCTC 15104).